Reading from the N-terminus, the 404-residue chain is Serine/threonine transporter SstT (404 aa).

Transmembrane regions (helical) follow at residues 17-37 (IGIG…LTGF), 39-59 (ILGK…VFAL), 75-95 (MTLI…VAVL), 138-158 (ALAT…GLAL), 179-199 (IVVW…FTTI), 212-232 (FLIL…NPLI), 287-307 (IPLG…VLTL), and 313-333 (FGIP…AVSA).

Belongs to the dicarboxylate/amino acid:cation symporter (DAACS) (TC 2.A.23) family.

It is found in the cell membrane. It carries out the reaction L-serine(in) + Na(+)(in) = L-serine(out) + Na(+)(out). It catalyses the reaction L-threonine(in) + Na(+)(in) = L-threonine(out) + Na(+)(out). In terms of biological role, involved in the import of serine and threonine into the cell, with the concomitant import of sodium (symport system). The protein is Serine/threonine transporter SstT of Streptococcus pyogenes serotype M2 (strain MGAS10270).